Here is a 245-residue protein sequence, read N- to C-terminus: Probable phosphatase YcdX (245 aa).

Zn(2+)-binding residues include H7, H9, H15, H40, E73, H101, H131, D192, and H194.

This sequence belongs to the PHP family. Homotrimer. Requires Zn(2+) as cofactor.

In Salmonella heidelberg (strain SL476), this protein is Probable phosphatase YcdX.